We begin with the raw amino-acid sequence, 240 residues long: Large ribosomal subunit protein uL2 (240 aa).

The disordered stretch occupies residues 200 to 240 (HPFGGGGRQHPGKPKSISRNAPPGRKVGDIASKRTGRGGNE).

Belongs to the universal ribosomal protein uL2 family. Part of the 50S ribosomal subunit. Forms a bridge to the 30S subunit in the 70S ribosome. Interacts weakly with protein L37Ae.

In terms of biological role, one of the primary rRNA binding proteins. Required for association of the 30S and 50S subunits to form the 70S ribosome, for tRNA binding and peptide bond formation. It has been suggested to have peptidyltransferase activity; this is somewhat controversial. Makes several contacts with the 16S rRNA in the 70S ribosome. In Haloarcula marismortui (strain ATCC 43049 / DSM 3752 / JCM 8966 / VKM B-1809) (Halobacterium marismortui), this protein is Large ribosomal subunit protein uL2 (rpl2).